The chain runs to 255 residues: Thiazole synthase (255 aa).

The active-site Schiff-base intermediate with DXP is K96. Residues G157, 183–184 (AG), and 205–206 (NT) each bind 1-deoxy-D-xylulose 5-phosphate.

The protein belongs to the ThiG family. In terms of assembly, homotetramer. Forms heterodimers with either ThiH or ThiS.

It localises to the cytoplasm. The catalysed reaction is [ThiS sulfur-carrier protein]-C-terminal-Gly-aminoethanethioate + 2-iminoacetate + 1-deoxy-D-xylulose 5-phosphate = [ThiS sulfur-carrier protein]-C-terminal Gly-Gly + 2-[(2R,5Z)-2-carboxy-4-methylthiazol-5(2H)-ylidene]ethyl phosphate + 2 H2O + H(+). It functions in the pathway cofactor biosynthesis; thiamine diphosphate biosynthesis. Its function is as follows. Catalyzes the rearrangement of 1-deoxy-D-xylulose 5-phosphate (DXP) to produce the thiazole phosphate moiety of thiamine. Sulfur is provided by the thiocarboxylate moiety of the carrier protein ThiS. In vitro, sulfur can be provided by H(2)S. The polypeptide is Thiazole synthase (Bacillus licheniformis (strain ATCC 14580 / DSM 13 / JCM 2505 / CCUG 7422 / NBRC 12200 / NCIMB 9375 / NCTC 10341 / NRRL NRS-1264 / Gibson 46)).